The sequence spans 334 residues: N-acetyl-gamma-glutamyl-phosphate reductase (334 aa).

Residue C154 is part of the active site.

It belongs to the NAGSA dehydrogenase family. Type 1 subfamily.

It is found in the cytoplasm. The catalysed reaction is N-acetyl-L-glutamate 5-semialdehyde + phosphate + NADP(+) = N-acetyl-L-glutamyl 5-phosphate + NADPH + H(+). The protein operates within amino-acid biosynthesis; L-arginine biosynthesis; N(2)-acetyl-L-ornithine from L-glutamate: step 3/4. Catalyzes the NADPH-dependent reduction of N-acetyl-5-glutamyl phosphate to yield N-acetyl-L-glutamate 5-semialdehyde. The protein is N-acetyl-gamma-glutamyl-phosphate reductase of Photorhabdus laumondii subsp. laumondii (strain DSM 15139 / CIP 105565 / TT01) (Photorhabdus luminescens subsp. laumondii).